Reading from the N-terminus, the 311-residue chain is Glutaminase (311 aa).

Positions 66, 116, 162, 169, 193, 245, and 263 each coordinate substrate.

The protein belongs to the glutaminase family. In terms of assembly, homotetramer.

The enzyme catalyses L-glutamine + H2O = L-glutamate + NH4(+). The polypeptide is Glutaminase (Rhodopseudomonas palustris (strain BisB5)).